The primary structure comprises 307 residues: 4-hydroxy-3-methylbut-2-enyl diphosphate reductase (307 aa).

A [4Fe-4S] cluster-binding site is contributed by Cys13. The (2E)-4-hydroxy-3-methylbut-2-enyl diphosphate site is built by His42 and His75. Dimethylallyl diphosphate-binding residues include His42 and His75. 2 residues coordinate isopentenyl diphosphate: His42 and His75. A [4Fe-4S] cluster-binding site is contributed by Cys97. Position 125 (His125) interacts with (2E)-4-hydroxy-3-methylbut-2-enyl diphosphate. His125 is a binding site for dimethylallyl diphosphate. Isopentenyl diphosphate is bound at residue His125. Glu127 serves as the catalytic Proton donor. Thr165 serves as a coordination point for (2E)-4-hydroxy-3-methylbut-2-enyl diphosphate. A [4Fe-4S] cluster-binding site is contributed by Cys195. (2E)-4-hydroxy-3-methylbut-2-enyl diphosphate is bound by residues Ser223, Ser224, Asn225, and Ser267. 4 residues coordinate dimethylallyl diphosphate: Ser223, Ser224, Asn225, and Ser267. Residues Ser223, Ser224, Asn225, and Ser267 each coordinate isopentenyl diphosphate.

This sequence belongs to the IspH family. [4Fe-4S] cluster is required as a cofactor.

The enzyme catalyses isopentenyl diphosphate + 2 oxidized [2Fe-2S]-[ferredoxin] + H2O = (2E)-4-hydroxy-3-methylbut-2-enyl diphosphate + 2 reduced [2Fe-2S]-[ferredoxin] + 2 H(+). It carries out the reaction dimethylallyl diphosphate + 2 oxidized [2Fe-2S]-[ferredoxin] + H2O = (2E)-4-hydroxy-3-methylbut-2-enyl diphosphate + 2 reduced [2Fe-2S]-[ferredoxin] + 2 H(+). Its pathway is isoprenoid biosynthesis; dimethylallyl diphosphate biosynthesis; dimethylallyl diphosphate from (2E)-4-hydroxy-3-methylbutenyl diphosphate: step 1/1. The protein operates within isoprenoid biosynthesis; isopentenyl diphosphate biosynthesis via DXP pathway; isopentenyl diphosphate from 1-deoxy-D-xylulose 5-phosphate: step 6/6. Functionally, catalyzes the conversion of 1-hydroxy-2-methyl-2-(E)-butenyl 4-diphosphate (HMBPP) into a mixture of isopentenyl diphosphate (IPP) and dimethylallyl diphosphate (DMAPP). Acts in the terminal step of the DOXP/MEP pathway for isoprenoid precursor biosynthesis. This chain is 4-hydroxy-3-methylbut-2-enyl diphosphate reductase, found in Chlamydia trachomatis serovar L2 (strain ATCC VR-902B / DSM 19102 / 434/Bu).